The sequence spans 114 residues: Ribonuclease P protein component (114 aa).

Belongs to the RnpA family. As to quaternary structure, consists of a catalytic RNA component (M1 or rnpB) and a protein subunit.

It carries out the reaction Endonucleolytic cleavage of RNA, removing 5'-extranucleotides from tRNA precursor.. In terms of biological role, RNaseP catalyzes the removal of the 5'-leader sequence from pre-tRNA to produce the mature 5'-terminus. It can also cleave other RNA substrates such as 4.5S RNA. The protein component plays an auxiliary but essential role in vivo by binding to the 5'-leader sequence and broadening the substrate specificity of the ribozyme. The protein is Ribonuclease P protein component of Exiguobacterium sp. (strain ATCC BAA-1283 / AT1b).